A 394-amino-acid chain; its full sequence is ORC1-type DNA replication protein 3 (394 aa).

Residues 66 to 70 (TGKTF) and tyrosine 207 contribute to the ATP site.

This sequence belongs to the CDC6/cdc18 family. Monomer. Interacts with Cdc6-1, Cdc6-2, MCM and PolB1.

Functionally, involved in regulation of DNA replication. May play essential roles in origin recognition and cell cycle control of replication. Binds to DNA, with a preference for molecules that contain a bubble, a fork, or a tail. Inhibits the binding of the MCM helicase to the origin DNA and inhibits its DNA helicase activity. Also regulates the DNA polymerase and the nuclease activities of PolB1. Inhibits the DNA-binding activity of Cdc6-1 and Cdc6-2. The chain is ORC1-type DNA replication protein 3 (cdc6-3) from Saccharolobus solfataricus (strain ATCC 35092 / DSM 1617 / JCM 11322 / P2) (Sulfolobus solfataricus).